A 382-amino-acid chain; its full sequence is Ribosomal RNA large subunit methyltransferase G (382 aa).

It belongs to the methyltransferase superfamily. RlmG family.

It is found in the cytoplasm. It carries out the reaction guanosine(1835) in 23S rRNA + S-adenosyl-L-methionine = N(2)-methylguanosine(1835) in 23S rRNA + S-adenosyl-L-homocysteine + H(+). Specifically methylates the guanine in position 1835 (m2G1835) of 23S rRNA. The polypeptide is Ribosomal RNA large subunit methyltransferase G (Aliivibrio fischeri (strain MJ11) (Vibrio fischeri)).